Here is a 1349-residue protein sequence, read N- to C-terminus: Serine/threonine-protein kinase GIN4 (1349 aa).

A compositionally biased stretch (low complexity) spans 1-20 (MPHSRQPSISSSIMSQSNHN). Residues 1–30 (MPHSRQPSISSSIMSQSNHNHPQKIGPWKL) are disordered. Residues S10, S11, S12, and S15 each carry the phosphoserine modification. The Protein kinase domain maps to 28 to 288 (WKLGKTLGRG…TEKILRHPLL (261 aa)). Residues 34–42 (LGRGATGRV) and K57 each bind ATP. Phosphothreonine is present on T69. D158 (proton acceptor) is an active-site residue. T191 carries the phosphothreonine modification. Phosphoserine occurs at positions 294, 300, and 303. Disordered stretches follow at residues 366-498 (QEDN…KAKP) and 510-532 (SNFS…YMID). Residues 369 to 384 (NTNNNSPKKSTSFNNK) are compositionally biased toward low complexity. S388, S390, and S393 each carry phosphoserine. The residue at position 397 (T397) is a Phosphothreonine. Polar residues-rich tracts occupy residues 406 to 418 (ISVS…QYKS) and 426 to 442 (ANRN…SANN). Phosphoserine is present on residues S407 and S409. T412 carries the post-translational modification Phosphothreonine. At S413 the chain carries Phosphoserine. The segment covering 443-470 (SPRKSPYKSPYRSPYRSPYKSPSKRYSY) has biased composition (low complexity). Phosphoserine occurs at positions 455, 469, 473, 477, and 485. The span at 471 to 488 (NQSPTKSPYGRRSNSQRQ) shows a compositional bias: polar residues. Phosphoserine is present on S556. Positions 570–585 (RNSIIGKNNNNSNSNK) are enriched in low complexity. Positions 570–593 (RNSIIGKNNNNSNSNKRMSKRKSI) are disordered. S634 carries the post-translational modification Phosphoserine. Positions 661–701 (EEKEAKEYERLMELERKKHEAELKARRELEKKKRRQKRRSI) form a coiled coil. The tract at residues 712 to 737 (KNDADPNNSEQELVDEGIKQPKRQSK) is disordered. A phosphoserine mark is found at S720 and S746. A disordered region spans residues 756–798 (TLEDVENLKRRSASQPVPKRRQTPVLTRRPVSRLDPLWQAHEN). A phosphothreonine mark is found at T778, T869, and T876. The residue at position 891 (S891) is a Phosphoserine. T941 bears the Phosphothreonine mark. S973 is modified (phosphoserine). 2 positions are modified to phosphothreonine: T990 and T992. S999 carries the post-translational modification Phosphoserine. Positions 1011–1229 (RTSYYDGSGK…AESKEEKPKS (219 aa)) are disordered. Residues 1024–1040 (RASTTKRYNVHSSSGQR) show a composition bias toward polar residues. Residues 1044-1053 (KVPDLPKNDY) show a composition bias toward basic and acidic residues. Position 1056 is a phosphothreonine (T1056). Phosphoserine is present on residues S1059, S1074, S1077, S1078, S1080, and S1094. Basic and acidic residues predominate over residues 1083 to 1094 (VFDKIKLPDGKS). Position 1095 is a phosphothreonine (T1095). S1097 and S1098 each carry phosphoserine. T1106 bears the Phosphothreonine mark. Positions 1134–1149 (IESSQPMSKVRGNNSS) are enriched in polar residues. At S1154 the chain carries Phosphoserine. Low complexity predominate over residues 1202–1215 (NNTNAATNTTTQQQ). S1218 bears the Phosphoserine mark.

It belongs to the protein kinase superfamily. CAMK Ser/Thr protein kinase family. NIM1 subfamily. As to quaternary structure, associates with the septin complex which consists of CDC3, CDC10, CDC11, CDC12, and SEP7. Hyperphosphorylated during mitosis at dozens of sites. Among these, 7 have perfect or minimal CDK consensus sites and are CDC28 targets.

It is found in the cytoplasm. The protein resides in the bud neck. The enzyme catalyses L-seryl-[protein] + ATP = O-phospho-L-seryl-[protein] + ADP + H(+). The catalysed reaction is L-threonyl-[protein] + ATP = O-phospho-L-threonyl-[protein] + ADP + H(+). In terms of biological role, serine/threonine-protein kinase which regulates the localization and the function of the septins during mitosis. Involved in the formation of the septin ring but not the basal septin band. Phosphorylates septins CDC11 and SEP7. Required for the transition from pseudohyphae to hyphae. Acts upstream of IRS4 and INP51 in regulating cell wall integrity responses. Involved in propolis-induced cell death. This is Serine/threonine-protein kinase GIN4 (GIN4) from Candida albicans (strain SC5314 / ATCC MYA-2876) (Yeast).